A 1033-amino-acid chain; its full sequence is RNA cytidine acetyltransferase (1033 aa).

Residues 285 to 294 and Arg-465 contribute to the ATP site; that span reads GRGKSAALGL. Residues 560–694 form the N-acetyltransferase domain; it reads VDLKNPKLPD…IHVRDAKTMP (135 aa). Acetyl-CoA-binding positions include 626–628, 633–639, and Arg-727; these read IAV and VKMGYGT. The segment at 988-1033 is disordered; the sequence is ENQIQKTNGKGARVVSIKGEKRKNNSLDASDKKTKEKPSSKKKFRK. Residues 1005–1026 are compositionally biased toward basic and acidic residues; it reads KGEKRKNNSLDASDKKTKEKPS.

Belongs to the RNA cytidine acetyltransferase family. NAT10 subfamily. In terms of assembly, interacts with tan1.

The protein localises to the nucleus. It is found in the nucleolus. The enzyme catalyses a cytidine in 18S rRNA + acetyl-CoA + ATP + H2O = an N(4)-acetylcytidine in 18S rRNA + ADP + phosphate + CoA + H(+). It carries out the reaction a cytidine in tRNA + acetyl-CoA + ATP + H2O = an N(4)-acetylcytidine in tRNA + ADP + phosphate + CoA + H(+). In terms of biological role, RNA cytidine acetyltransferase with specificity toward both 18S rRNA and tRNAs. Catalyzes the formation of N(4)-acetylcytidine (ac4C) at positions 1297 and 1815 in 18S rRNA. Required for early nucleolar cleavages of precursor rRNA at sites A0, A1 and A2 during 18S rRNA synthesis. Catalyzes the formation of ac4C in serine and leucine tRNAs. Requires the tRNA-binding adapter protein tan1 for full tRNA acetyltransferase activity but not for 18S rRNA acetylation. The polypeptide is RNA cytidine acetyltransferase (Schizosaccharomyces pombe (strain 972 / ATCC 24843) (Fission yeast)).